Reading from the N-terminus, the 83-residue chain is U25-theraphotoxin-Cg1b (83 aa).

The first 23 residues, 1–23, serve as a signal peptide directing secretion; sequence MRFHTLLFLSFLLLVSCALICTA. A propeptide spanning residues 24-48 is cleaved from the precursor; that stretch reads QHPGLEKSGMFHENVGKGQHIEEKR. Cystine bridges form between C50/C66, C57/C71, and C65/C79.

Belongs to the neurotoxin 07 (Beta/delta-agtx) family. 03 (aga-4) subfamily. JZTX sub-subfamily. Expressed by the venom gland.

It localises to the secreted. Probable ion channel inhibitor. The chain is U25-theraphotoxin-Cg1b from Chilobrachys guangxiensis (Chinese earth tiger tarantula).